The sequence spans 229 residues: Ribose-5-phosphate isomerase A (229 aa).

Substrate is bound by residues 28–31 (TGST), 84–87 (DGAD), and 97–100 (KGGG). The Proton acceptor role is filled by Glu-106. Residue Lys-124 coordinates substrate.

This sequence belongs to the ribose 5-phosphate isomerase family. In terms of assembly, homodimer.

It carries out the reaction aldehydo-D-ribose 5-phosphate = D-ribulose 5-phosphate. It participates in carbohydrate degradation; pentose phosphate pathway; D-ribose 5-phosphate from D-ribulose 5-phosphate (non-oxidative stage): step 1/1. In terms of biological role, catalyzes the reversible conversion of ribose-5-phosphate to ribulose 5-phosphate. The protein is Ribose-5-phosphate isomerase A of Lacticaseibacillus paracasei (strain ATCC 334 / BCRC 17002 / CCUG 31169 / CIP 107868 / KCTC 3260 / NRRL B-441) (Lactobacillus paracasei).